A 511-amino-acid polypeptide reads, in one-letter code: 2-isopropylmalate synthase (511 aa).

Residues 6–269 (IIIFDTTLRD…YTDIKCENIF (264 aa)) form the Pyruvate carboxyltransferase domain. Mn(2+)-binding residues include D15, H203, H205, and N239. The segment at 394–511 (VIEKLSVISG…SLKVEERKMA (118 aa)) is regulatory domain.

This sequence belongs to the alpha-IPM synthase/homocitrate synthase family. LeuA type 1 subfamily. As to quaternary structure, homodimer. It depends on Mn(2+) as a cofactor.

The protein resides in the cytoplasm. It carries out the reaction 3-methyl-2-oxobutanoate + acetyl-CoA + H2O = (2S)-2-isopropylmalate + CoA + H(+). The protein operates within amino-acid biosynthesis; L-leucine biosynthesis; L-leucine from 3-methyl-2-oxobutanoate: step 1/4. In terms of biological role, catalyzes the condensation of the acetyl group of acetyl-CoA with 3-methyl-2-oxobutanoate (2-ketoisovalerate) to form 3-carboxy-3-hydroxy-4-methylpentanoate (2-isopropylmalate). This chain is 2-isopropylmalate synthase, found in Campylobacter jejuni subsp. jejuni serotype O:23/36 (strain 81-176).